The chain runs to 128 residues: UPF0325 protein NT01EI_0832 (128 aa).

The protein belongs to the UPF0325 family.

In Edwardsiella ictaluri (strain 93-146), this protein is UPF0325 protein NT01EI_0832.